Reading from the N-terminus, the 190-residue chain is Cytoglobin (190 aa).

Residues 1–21 (MEKVPGDMEIERRERSEELSE) form a disordered region. The Globin domain occupies 18–167 (ELSEAERKAV…IYSHVTAAYK (150 aa)). A disulfide bridge connects residues Cys-38 and Cys-83. Positions 81 and 113 each coordinate heme b.

This sequence belongs to the globin family. In terms of assembly, monomeric. Homodimer; disulfide-linked in vitro. Also homooligomeric in vitro. Post-translationally, the formation of an intramolecular disulfide bond between cysteines Cys-38 and Cys-83 specifically enhances the nitrite reductase activity. As to expression, expressed in brain and retina by non-neuronal cells (at protein level). This is the major globin expressed in vascular smooth muscle and is not present in the endothelium (at protein level).

The protein resides in the cytoplasm. Its subcellular location is the nucleus. The enzyme catalyses Fe(II)-heme b-[protein] + nitric oxide + O2 = Fe(III)-heme b-[protein] + nitrate. The catalysed reaction is 2 superoxide + 2 H(+) = H2O2 + O2. It catalyses the reaction Fe(III)-heme b-[protein] + nitric oxide + H2O = Fe(II)-heme b-[protein] + nitrite + 2 H(+). It carries out the reaction H2O2 + AH2 = A + 2 H2O. Its activity is regulated as follows. The nitric oxide dioxygenase activity is activated by a reducing system composed of cytochrome b5, its upstream reductase CYB5R3 and NADH. Probable multifunctional globin with a hexacoordinated heme iron required for the catalysis of various reactions depending on redox condition of the cell as well as oxygen availability. Has a nitric oxide dioxygenase (NOD) activity and is most probably involved in cell-mediated and oxygen-dependent nitric oxide consumption. By scavenging this second messenger may regulate several biological processes including endothelium-mediated vasodilation and vascular tone. Under normoxic conditions functions as a nitric oxide dioxygenase (NOD) but under hypoxic conditions the globin may switch its function to that of a nitrite (NO2) reductase (NiR), generating nitric oxide. Could also have peroxidase and superoxide dismutase activities, detoxifying reactive oxygen species and protecting cells against oxidative stress. Also binds dioxygen with low affinity and could function as an oxygen sensor but has probably no function as a respiratory oxygen carrier. The chain is Cytoglobin from Mus musculus (Mouse).